The sequence spans 156 residues: Holliday junction resolvase (156 aa).

This sequence belongs to the RuvC family. Poxviruses-type subfamily. It depends on Mg(2+) as a cofactor.

In terms of biological role, nuclease that specifically cleaves and resolves four-way DNA Holliday junctions into linear duplex products. This is Holliday junction resolvase from Vertebrata (FPV).